A 393-amino-acid chain; its full sequence is Formate-dependent phosphoribosylglycinamide formyltransferase (393 aa).

N(1)-(5-phospho-beta-D-ribosyl)glycinamide is bound by residues 22–23 (EL) and E82. ATP contacts are provided by residues R114, K155, 160–165 (SSGKGQ), 195–198 (EGFI), and E203. The ATP-grasp domain occupies 119–308 (RLAAEELDLP…QFALHARAIL (190 aa)). Mg(2+) is bound by residues E267 and E279. Residues D286, K356, and 363–364 (RR) each bind N(1)-(5-phospho-beta-D-ribosyl)glycinamide.

It belongs to the PurK/PurT family. Homodimer.

The catalysed reaction is N(1)-(5-phospho-beta-D-ribosyl)glycinamide + formate + ATP = N(2)-formyl-N(1)-(5-phospho-beta-D-ribosyl)glycinamide + ADP + phosphate + H(+). It participates in purine metabolism; IMP biosynthesis via de novo pathway; N(2)-formyl-N(1)-(5-phospho-D-ribosyl)glycinamide from N(1)-(5-phospho-D-ribosyl)glycinamide (formate route): step 1/1. In terms of biological role, involved in the de novo purine biosynthesis. Catalyzes the transfer of formate to 5-phospho-ribosyl-glycinamide (GAR), producing 5-phospho-ribosyl-N-formylglycinamide (FGAR). Formate is provided by PurU via hydrolysis of 10-formyl-tetrahydrofolate. This chain is Formate-dependent phosphoribosylglycinamide formyltransferase, found in Pseudomonas putida (strain W619).